The primary structure comprises 160 residues: Transcription elongation factor GreA (160 aa).

Residues 43-75 are a coiled coil; sequence LSENAEYEAAREQQAQMESKIVDLENKLTRASI.

Belongs to the GreA/GreB family.

In terms of biological role, necessary for efficient RNA polymerase transcription elongation past template-encoded arresting sites. The arresting sites in DNA have the property of trapping a certain fraction of elongating RNA polymerases that pass through, resulting in locked ternary complexes. Cleavage of the nascent transcript by cleavage factors such as GreA or GreB allows the resumption of elongation from the new 3'terminus. GreA releases sequences of 2 to 3 nucleotides. This is Transcription elongation factor GreA from Prosthecochloris aestuarii (strain DSM 271 / SK 413).